We begin with the raw amino-acid sequence, 303 residues long: D-alanine--D-alanine ligase (303 aa).

Residues 100–295 (KQLLRRHGIL…FPALIARLIE (196 aa)) enclose the ATP-grasp domain. 127 to 180 (GLGYPLFVKPNTGGSSLCLSRVTQPEGLAPALEAVFAHCGEAIVEPAIPGVEVT) is an ATP binding site. Positions 249, 262, and 264 each coordinate Mg(2+).

Belongs to the D-alanine--D-alanine ligase family. It depends on Mg(2+) as a cofactor. Mn(2+) is required as a cofactor.

Its subcellular location is the cytoplasm. The enzyme catalyses 2 D-alanine + ATP = D-alanyl-D-alanine + ADP + phosphate + H(+). It participates in cell wall biogenesis; peptidoglycan biosynthesis. In terms of biological role, cell wall formation. This chain is D-alanine--D-alanine ligase, found in Nitratidesulfovibrio vulgaris (strain ATCC 29579 / DSM 644 / CCUG 34227 / NCIMB 8303 / VKM B-1760 / Hildenborough) (Desulfovibrio vulgaris).